Reading from the N-terminus, the 520-residue chain is Putative transporter svop-1 (520 aa).

Over 1 to 85 the chain is Cytoplasmic; sequence MGDKAILTEV…LGFGRFQLKL (85 aa). Residues 86–106 traverse the membrane as a helical segment; it reads SILTGMAWMADAMEMMLLSLI. Topologically, residues 107–120 are extracellular; sequence SPALACEWGISSVQ. The helical transmembrane segment at 121–141 threads the bilayer; that stretch reads QALVTTCVFSGMMLSSTFWGK. Residues 142 to 157 lie on the Cytoplasmic side of the membrane; it reads ICDRFGRRKGLTFSTL. Residues 158-178 form a helical membrane-spanning segment; it reads VACIMGVISGMSPHFYVLLFF. Residue R179 is a topological domain, extracellular. A helical membrane pass occupies residues 180–200; sequence GLTGFGIGGVPQSVTLYAEFL. Over 201 to 208 the chain is Cytoplasmic; the sequence is PTAQRAKC. The chain crosses the membrane as a helical span at residues 209–229; it reads VVLIESFWAIGAVFEALLAYF. The Extracellular segment spans residues 230 to 237; it reads VMESFGWR. The chain crosses the membrane as a helical span at residues 238 to 258; it reads ALMFLSSLPLGIFAVASFWLP. Residues 259–319 lie on the Cytoplasmic side of the membrane; the sequence is ESARFDMASG…LLSPDLRKTT (61 aa). A helical membrane pass occupies residues 320–340; the sequence is ILLWCIWAITAFSYYGMVLFT. Over 341-372 the chain is Extracellular; that stretch reads TVLFQSHDECHGGLFSNGTQMEVCQPLTRSDY. Residues 373-393 form a helical membrane-spanning segment; that stretch reads FDLLSTTLAEFPGLIITVLII. Residues 394–410 are Cytoplasmic-facing; the sequence is EWFGRKKTMALEYAVFA. The chain crosses the membrane as a helical span at residues 411-431; sequence IFTFLLYFCLDRFTVTVLIFV. Topologically, residues 432 to 434 are extracellular; sequence ARA. Residues 435-455 form a helical membrane-spanning segment; it reads FISGAFQCAYVYTPEVYPTTL. Topologically, residues 456–461 are cytoplasmic; the sequence is RAVGLG. Residues 462–487 form a helical membrane-spanning segment; sequence TCSAMARIGAIVTPFIAQVASEKSLS. The Extracellular portion of the chain corresponds to 488 to 489; that stretch reads LP. The chain crosses the membrane as a helical span at residues 490–509; it reads IGIYGTAAILGLIASLSLPI. Over 510–520 the chain is Cytoplasmic; sequence ETKGRQMMDSH.

It belongs to the major facilitator superfamily.

It is found in the membrane. The polypeptide is Putative transporter svop-1 (Caenorhabditis elegans).